We begin with the raw amino-acid sequence, 246 residues long: Acetoacetate decarboxylase (246 aa).

The active-site Schiff-base intermediate with acetoacetate is lysine 116.

Belongs to the ADC family.

The enzyme catalyses acetoacetate + H(+) = acetone + CO2. In terms of biological role, catalyzes the conversion of acetoacetate to acetone and carbon dioxide. This is Acetoacetate decarboxylase from Clostridium botulinum (strain Eklund 17B / Type B).